Here is a 293-residue protein sequence, read N- to C-terminus: Homoserine kinase (293 aa).

83-93 serves as a coordination point for ATP; the sequence is PITRGMGSSSA.

This sequence belongs to the GHMP kinase family. Homoserine kinase subfamily.

It is found in the cytoplasm. It catalyses the reaction L-homoserine + ATP = O-phospho-L-homoserine + ADP + H(+). It functions in the pathway amino-acid biosynthesis; L-threonine biosynthesis; L-threonine from L-aspartate: step 4/5. Its function is as follows. Catalyzes the ATP-dependent phosphorylation of L-homoserine to L-homoserine phosphate. The chain is Homoserine kinase from Helicobacter pylori (strain ATCC 700392 / 26695) (Campylobacter pylori).